Reading from the N-terminus, the 244-residue chain is Orotidine 5'-phosphate decarboxylase (244 aa).

Substrate-binding positions include D14, K36, 63-72 (DLKFHDIPNT), T127, R188, Q197, G217, and R218. K65 (proton donor) is an active-site residue.

It belongs to the OMP decarboxylase family. Type 1 subfamily. Homodimer.

The catalysed reaction is orotidine 5'-phosphate + H(+) = UMP + CO2. It functions in the pathway pyrimidine metabolism; UMP biosynthesis via de novo pathway; UMP from orotate: step 2/2. In terms of biological role, catalyzes the decarboxylation of orotidine 5'-monophosphate (OMP) to uridine 5'-monophosphate (UMP). In Syntrophotalea carbinolica (strain DSM 2380 / NBRC 103641 / GraBd1) (Pelobacter carbinolicus), this protein is Orotidine 5'-phosphate decarboxylase.